We begin with the raw amino-acid sequence, 210 residues long: 3-phospho-D-glycerate guanylyltransferase (210 aa).

The protein belongs to the CofC family.

It catalyses the reaction (2R)-3-phosphoglycerate + GTP + H(+) = 3-[(R)-glyceryl]-diphospho-5'-guanosine + diphosphate. It participates in cofactor biosynthesis; coenzyme F420 biosynthesis. In terms of biological role, guanylyltransferase that catalyzes the activation of (2R)-3-phosphoglycerate (3PG) as 3-[(R)-glyceryl]-diphospho-5'-guanosine, via the condensation of 3PG with GTP. It is involved in the biosynthesis of a derivative of the hydride carrier cofactor coenzyme F420, 3PG-F420. In Colwellia psychrerythraea (strain 34H / ATCC BAA-681) (Vibrio psychroerythus), this protein is 3-phospho-D-glycerate guanylyltransferase.